We begin with the raw amino-acid sequence, 613 residues long: Histone acetyltransferase KAT7 (613 aa).

The tract at residues 1 to 175 (MAIGVVKRNA…SDLSHRPKRR (175 aa)) is disordered. Residues serine 12, serine 52, serine 55, serine 59, and serine 66 each carry the phosphoserine modification. The span at 44 to 59 (VTRSSARLSQSSQDSS) shows a compositional bias: low complexity. A phosphothreonine mark is found at threonine 87 and threonine 90. A compositionally biased stretch (polar residues) spans 98–107 (QTRSSGSETE). Serine 104 carries the post-translational modification Phosphoserine. Threonine 106 carries the post-translational modification Phosphothreonine. A compositionally biased stretch (basic and acidic residues) spans 112-127 (FSDRETKNTADHDESP). Phosphoserine occurs at positions 113 and 126. A Phosphothreonine modification is found at threonine 130. A compositionally biased stretch (low complexity) spans 136-147 (PSSESDIDISSP). The span at 150–170 (SHDESIAKDMSLKDSGSDLSH) shows a compositional bias: basic and acidic residues. Phosphoserine is present on residues serine 160, serine 164, serine 166, and serine 180. A CCHHC-type zinc finger spans residues 178–221 (HESYNFNMKCPTPGCNSLGHLTGKHERHFSISGCPLYHNLSADE). N6-acetyllysine is present on residues lysine 201 and lysine 279. Residue lysine 325 forms a Glycyl lysine isopeptide (Lys-Gly) (interchain with G-Cter in SUMO2) linkage. The MYST-type HAT domain maps to 334-609 (EGSNMIKTIA…MDPSCLKWTP (276 aa)). Lysine 340 participates in a covalent cross-link: Glycyl lysine isopeptide (Lys-Gly) (interchain with G-Cter in ubiquitin). The C2HC MYST-type zinc-finger motif lies at 367–392 (LYMCEFCLKYMKSQTILRRHMAKCVW). The Zn(2+) site is built by cysteine 370, cysteine 373, histidine 386, and cysteine 390. Position 434 is an N6-acetyllysine; by autocatalysis (lysine 434). Residues 477–479 (ILT) and 485–490 (RQGYGK) each bind acetyl-CoA. Phosphoserine is present on serine 508. The active-site Proton donor/acceptor is glutamate 510. Residues serine 514 and serine 523 each contribute to the acetyl-CoA site.

It belongs to the MYST (SAS/MOZ) family. In terms of assembly, component of the HBO1 complex composed of KAT7/HBO1, MEAF6, ING4 or ING5, and one scaffold subunit: complexes containing BRPF scaffold (BRPF1, BRD1/BRPF2 or BRPF3) direct KAT7/HBO1 specificity towards H3K14ac, while complexes containing JADE scaffold (JADE1, JADE2 and JADE3) mediate acetylation of histone H4. Interacts with MCM2 and ORC1. Interacts with the androgen receptor (AR) in the presence of dihydrotestosterone. Interacts with CDT1. Interacts with MAP2K1 and CUL1. Interacts with p53/TP53; leading to inhibit histone acetyltransferase activity. Phosphorylated at Ser-52 and Ser-55 by ATR in response to DNA damage, promoting its ubiquitination by the CRL4(DDB2) complex and subsequent degradation. Phosphorylation at Ser-52 and Ser-55 by ATR in response to ultraviolet-induced DNA, promotes localization to DNA damage sites. Phosphorylation at Ser-59 by PLK1 during mitosis seems important for prereplicative complex formation and DNA replication licensing, and requires prior phosphorylation at Thr-87 and Thr-90 by CDK1. Phosphorylated by MAP2K1, which accelerates its degradation. Post-translationally, ubiquitinated at Lys-340, leading to proteasomal degradation. Ubiquitinated by the CRL4(DDB2) complex following phosphorylation by ATR, leading to its subsequent degradation. In terms of processing, autoacetylation at Lys-434 is required for proper function. Widely expressed in adult tissues.

Its subcellular location is the nucleus. The protein resides in the chromosome. It localises to the centromere. The protein localises to the cytoplasm. It is found in the cytosol. It carries out the reaction L-lysyl-[protein] + acetyl-CoA = N(6)-acetyl-L-lysyl-[protein] + CoA + H(+). With respect to regulation, histone acetyltransferase activity is inhibited by GMNN in the context of a complex with CDT1, inhibiting histone H4 acetylation and DNA replication licensing. Catalytic subunit of histone acetyltransferase HBO1 complexes, which specifically mediate acetylation of histone H3 at 'Lys-14' (H3K14ac), thereby regulating various processes, such as gene transcription, protein ubiquitination, immune regulation, stem cell pluripotent and self-renewal maintenance and embryonic development. Some complexes also catalyze acetylation of histone H4 at 'Lys-5', 'Lys-8' and 'Lys-12' (H4K5ac, H4K8ac and H4K12ac, respectively), regulating DNA replication initiation, regulating DNA replication initiation. Specificity of the HBO1 complexes is determined by the scaffold subunit: complexes containing BRPF scaffold (BRPF1, BRD1/BRPF2 or BRPF3) direct KAT7/HBO1 specificity towards H3K14ac, while complexes containing JADE (JADE1, JADE2 and JADE3) scaffold direct KAT7/HBO1 specificity towards histone H4. H3K14ac promotes transcriptional elongation by facilitating the processivity of RNA polymerase II. Acts as a key regulator of hematopoiesis by forming a complex with BRD1/BRPF2, directing KAT7/HBO1 specificity towards H3K14ac and promoting erythroid differentiation. H3K14ac is also required for T-cell development. KAT7/HBO1-mediated acetylation facilitates two consecutive steps, licensing and activation, in DNA replication initiation: H3K14ac facilitates the activation of replication origins, and histone H4 acetylation (H4K5ac, H4K8ac and H4K12ac) facilitates chromatin loading of MCM complexes, promoting DNA replication licensing. Acts as a positive regulator of centromeric CENPA assembly: recruited to centromeres and mediates histone acetylation, thereby preventing centromere inactivation mediated by SUV39H1, possibly by increasing histone turnover/exchange. Involved in nucleotide excision repair: phosphorylation by ATR in response to ultraviolet irradiation promotes its localization to DNA damage sites, where it mediates histone acetylation to facilitate recruitment of XPC at the damaged DNA sites. Acts as an inhibitor of NF-kappa-B independently of its histone acetyltransferase activity. Functionally, plays a central role in the maintenance of leukemia stem cells in acute myeloid leukemia (AML). Acts by mediating acetylation of histone H3 at 'Lys-14' (H3K14ac), thereby facilitating the processivity of RNA polymerase II to maintain the high expression of key genes, such as HOXA9 and HOXA10 that help to sustain the functional properties of leukemia stem cells. In Mus musculus (Mouse), this protein is Histone acetyltransferase KAT7.